The following is a 208-amino-acid chain: Orotidine 5'-phosphate decarboxylase (208 aa).

Substrate-binding positions include aspartate 7, lysine 29, 57–66 (DLKLADIPNT), serine 109, 162–172 (PGIGAQGGKAK), glycine 185, and arginine 186. The active-site Proton donor is the lysine 59.

This sequence belongs to the OMP decarboxylase family. Type 1 subfamily. In terms of assembly, homodimer.

It catalyses the reaction orotidine 5'-phosphate + H(+) = UMP + CO2. It functions in the pathway pyrimidine metabolism; UMP biosynthesis via de novo pathway; UMP from orotate: step 2/2. Its function is as follows. Catalyzes the decarboxylation of orotidine 5'-monophosphate (OMP) to uridine 5'-monophosphate (UMP). This is Orotidine 5'-phosphate decarboxylase (pyrF) from Pyrococcus horikoshii (strain ATCC 700860 / DSM 12428 / JCM 9974 / NBRC 100139 / OT-3).